The sequence spans 296 residues: Phosphatidylglycerol--prolipoprotein diacylglyceryl transferase (296 aa).

3 helical membrane passes run 17-37 (LAVR…IVVG), 59-79 (MMFY…VLFY), and 97-117 (GGMS…LFAW). Arg142 serves as a coordination point for a 1,2-diacyl-sn-glycero-3-phospho-(1'-sn-glycerol). 2 helical membrane passes run 230-250 (MGAI…TVEF) and 265-285 (LSMG…MMIW).

Belongs to the Lgt family.

Its subcellular location is the cell inner membrane. The enzyme catalyses L-cysteinyl-[prolipoprotein] + a 1,2-diacyl-sn-glycero-3-phospho-(1'-sn-glycerol) = an S-1,2-diacyl-sn-glyceryl-L-cysteinyl-[prolipoprotein] + sn-glycerol 1-phosphate + H(+). The protein operates within protein modification; lipoprotein biosynthesis (diacylglyceryl transfer). Catalyzes the transfer of the diacylglyceryl group from phosphatidylglycerol to the sulfhydryl group of the N-terminal cysteine of a prolipoprotein, the first step in the formation of mature lipoproteins. The polypeptide is Phosphatidylglycerol--prolipoprotein diacylglyceryl transferase (Burkholderia pseudomallei (strain 668)).